A 238-amino-acid chain; its full sequence is Ephrin-A3 (238 aa).

Positions 1 to 22 (MAAAPLLLLLLLVPVPLLPLLA) are cleaved as a signal peptide. Residues 30 to 169 (GNRHAVYWNS…RMKVFVCCAS (140 aa)) form the Ephrin RBD domain. N-linked (GlcNAc...) asparagine glycosylation is found at asparagine 38, asparagine 67, and asparagine 100. 2 disulfides stabilise this stretch: cysteine 63–cysteine 110 and cysteine 99–cysteine 158. The GPI-anchor amidated glycine moiety is linked to residue glycine 214. Positions 215–238 (TSPKREHLPLAVGIAFFLMTFLAS) are cleaved as a propeptide — removed in mature form.

The protein belongs to the ephrin family. In terms of assembly, interacts with EPHA8; activates EPHA8. As to expression, expressed in brain, skeletal muscle, spleen, thymus, prostate, testis, ovary, small intestine, and peripheral blood leukocytes.

It localises to the cell membrane. In terms of biological role, cell surface GPI-bound ligand for Eph receptors, a family of receptor tyrosine kinases which are crucial for migration, repulsion and adhesion during neuronal, vascular and epithelial development. Binds promiscuously Eph receptors residing on adjacent cells, leading to contact-dependent bidirectional signaling into neighboring cells. The signaling pathway downstream of the receptor is referred to as forward signaling while the signaling pathway downstream of the ephrin ligand is referred to as reverse signaling. The protein is Ephrin-A3 (EFNA3) of Homo sapiens (Human).